The sequence spans 156 residues: PopC secretion inhibitor (156 aa).

Positions Met1–Gln89 are disordered. Residues Trp8–Asp28 show a composition bias toward basic and acidic residues.

In terms of assembly, interacts with PopC in non-starving cells.

It localises to the cytoplasm. With respect to regulation, in response to starvation, RelA is activated resulting in the accumulation of (p)ppGpp, which causes the degradation of PopD in an FtsH(D)-dependent manner, thereby releasing pre-formed PopC for secretion. In terms of biological role, inhibitor of protease PopC. In non-starving cells, forms a cytoplasmic complex with PopC and inhibits PopC secretion and activity. The chain is PopC secretion inhibitor from Myxococcus xanthus (strain DK1622).